Here is a 445-residue protein sequence, read N- to C-terminus: CBL-interacting serine/threonine-protein kinase 8 (445 aa).

Residues 9–262 (YELGRTIGEG…IAEIRKDEWF (254 aa)) form the Protein kinase domain. ATP is bound by residues 15–23 (IGEGTFAKV) and K38. D132 functions as the Proton acceptor in the catalytic mechanism. Residues 150-177 (DFGLSALPEQGVTILKTTCGTPNYVAPE) form an activation loop region. S154 carries the phosphoserine modification. A Phosphothreonine modification is found at T166. The region spanning 302-326 (TGPLTLNAFDLIILSQGLNLATLFD) is the NAF domain. The PPI stretch occupies residues 333 to 362 (KHQTRFISHKPANVVLSSMEVVSQSMGFKT).

This sequence belongs to the protein kinase superfamily. CAMK Ser/Thr protein kinase family. SNF1 subfamily. In terms of assembly, interacts with CBL1 and CBL9. Mn(2+) serves as cofactor. As to expression, mostly expressed in roots, and, to a lower extent, in leaves, stems, flowers, and siliques.

The enzyme catalyses L-seryl-[protein] + ATP = O-phospho-L-seryl-[protein] + ADP + H(+). The catalysed reaction is L-threonyl-[protein] + ATP = O-phospho-L-threonyl-[protein] + ADP + H(+). CIPK serine-threonine protein kinases interact with CBL proteins. Binding of a CBL protein to the regulatory NAF domain of CIPK protein lead to the activation of the kinase in a calcium-dependent manner. The protein is CBL-interacting serine/threonine-protein kinase 8 (CIPK8) of Arabidopsis thaliana (Mouse-ear cress).